A 447-amino-acid chain; its full sequence is C4-dicarboxylate transport protein (447 aa).

8 consecutive transmembrane segments (helical) span residues 19–39 (ILYV…HFYP), 55–75 (LVKM…IAGL), 90–110 (IYFL…ANVV), 155–175 (AFAS…GIAL), 199–219 (LVAI…AFTI), 232–252 (MLVG…LGLV), 343–363 (LLLV…AGFI), and 366–386 (AATL…ILGV).

This sequence belongs to the dicarboxylate/amino acid:cation symporter (DAACS) (TC 2.A.23) family.

The protein localises to the cell inner membrane. Responsible for the transport of dicarboxylates such as succinate, fumarate, and malate from the periplasm across the membrane. The chain is C4-dicarboxylate transport protein from Rhodospirillum rubrum (strain ATCC 11170 / ATH 1.1.1 / DSM 467 / LMG 4362 / NCIMB 8255 / S1).